A 239-amino-acid polypeptide reads, in one-letter code: Lipoprotein-releasing system ATP-binding protein LolD (239 aa).

Positions 14 to 239 constitute an ABC transporter domain; the sequence is IRAERLGKTY…KLRELAPSAV (226 aa). ATP is bound at residue 50–57; sequence GASGAGKS.

It belongs to the ABC transporter superfamily. Lipoprotein translocase (TC 3.A.1.125) family. As to quaternary structure, the complex is composed of two ATP-binding proteins (LolD) and two transmembrane proteins (LolC and LolE).

The protein resides in the cell inner membrane. In terms of biological role, part of the ABC transporter complex LolCDE involved in the translocation of mature outer membrane-directed lipoproteins, from the inner membrane to the periplasmic chaperone, LolA. Responsible for the formation of the LolA-lipoprotein complex in an ATP-dependent manner. This is Lipoprotein-releasing system ATP-binding protein LolD from Xanthomonas campestris pv. campestris (strain 8004).